The primary structure comprises 477 residues: Interferon gamma receptor 1 (477 aa).

An N-terminal signal peptide occupies residues methionine 1–glycine 25. At alanine 26–serine 254 the chain is on the extracellular side. N-linked (GlcNAc...) asparagine glycans are attached at residues asparagine 61 and asparagine 85. Cystine bridges form between cysteine 83–cysteine 91, cysteine 128–cysteine 174, cysteine 203–cysteine 208, and cysteine 222–cysteine 243. Residues isoleucine 255–tyrosine 275 traverse the membrane as a helical segment. Residues tryptophan 276–serine 477 are Cytoplasmic-facing. Disordered stretches follow at residues threonine 335–asparagine 386 and serine 402–aspartate 446. Residue serine 362 is modified to Phosphoserine. The residue at position 367 (threonine 367) is a Phosphothreonine. The residue at position 370 (serine 370) is a Phosphoserine. Threonine 373 and threonine 375 each carry phosphothreonine. Polar residues predominate over residues threonine 375–asparagine 386. Phosphoserine occurs at positions 379 and 402. Residues serine 402–leucine 416 are compositionally biased toward low complexity. Position 445 is a phosphotyrosine (tyrosine 445).

This sequence belongs to the type II cytokine receptor family. Monomer. Heterodimer with IFNGR2, to form the IFNG receptor complex. Interacts with JAK1. Interacts (when phosphorylated) with STAT1. Interacts with SOCS1. Post-translationally, phosphorylated at Ser/Thr residues. Phosphorylation of Tyr-445 is required for IFNG receptor signal transduction. Influenza virus infection leads to phosphorylation in a CSNK1A1-dependent manner. In terms of processing, ubiquitinated after phosphorylation in a CSNK1A1-dependent manner, leading to the lysosome-dependent degradation. Proteasomally degraded through 'Lys-48'-mediated ubiquitination. Ubiquitination is necessary for efficient IFNGR1 signaling.

It is found in the cell membrane. Receptor subunit for interferon gamma/INFG that plays crucial roles in antimicrobial, antiviral, and antitumor responses by activating effector immune cells and enhancing antigen presentation (, PubMed:20926559, PubMed:27286456). Associates with transmembrane accessory factor IFNGR2 to form a functional receptor. Upon ligand binding, the intracellular domain of IFNGR1 opens out to allow association of downstream signaling components JAK1 and JAK2. In turn, activated JAK1 phosphorylates IFNGR1 to form a docking site for STAT1. Subsequent phosphorylation of STAT1 leads to its dimerization, translocation to the nucleus, and stimulation of target gene transcription. STAT3 can also be activated in a similar manner although activation seems weaker. IFNGR1 intracellular domain phosphorylation also provides a docking site for SOCS1 that regulates the JAK-STAT pathway by competing with STAT1 binding to IFNGR1. This chain is Interferon gamma receptor 1, found in Mus musculus (Mouse).